A 492-amino-acid chain; its full sequence is NAD(P)H-quinone oxidoreductase subunit 2 A, chloroplastic (492 aa).

The next 13 membrane-spanning stretches (helical) occupy residues 6-26, 39-59, 81-101, 106-126, 131-151, 165-185, 209-229, 277-297, 305-325, 329-349, 377-397, 400-420, and 466-486; these read LLLFHGSFIFPECILIFGLIL, TPWLYFISSTSLVMSITALLF, VFQFLILLCSTLCIPLSVEYI, MAITEFLLFVLTATLGGMFLC, LITIFVAPECFSLCSYLLSGY, YLLMGGASSSILVHGFSWLYG, PGISIALISITVGIGFKLSPA, WHLLLEILAILSMILGNLIAI, MLAYSSIGQIGYVIIGIIVGD, GYASMITYMLFYISMNLGTFA, ALSSALCLLSLGGIPPLAGFF, LHLFWCGWQAGLYFLVSIGLL, and MIVCVIASTIPGISMNPIIAI.

The protein belongs to the complex I subunit 2 family. In terms of assembly, NDH is composed of at least 16 different subunits, 5 of which are encoded in the nucleus.

It localises to the plastid. It is found in the chloroplast thylakoid membrane. It catalyses the reaction a plastoquinone + NADH + (n+1) H(+)(in) = a plastoquinol + NAD(+) + n H(+)(out). It carries out the reaction a plastoquinone + NADPH + (n+1) H(+)(in) = a plastoquinol + NADP(+) + n H(+)(out). Functionally, NDH shuttles electrons from NAD(P)H:plastoquinone, via FMN and iron-sulfur (Fe-S) centers, to quinones in the photosynthetic chain and possibly in a chloroplast respiratory chain. The immediate electron acceptor for the enzyme in this species is believed to be plastoquinone. Couples the redox reaction to proton translocation, and thus conserves the redox energy in a proton gradient. This is NAD(P)H-quinone oxidoreductase subunit 2 A, chloroplastic from Illicium oligandrum (Star anise).